A 1617-amino-acid polypeptide reads, in one-letter code: ATP-binding cassette sub-family A member 6 (1617 aa).

The chain crosses the membrane as a helical span at residues 31–51; the sequence is LLEWGLSILLGLCIALFSSSM. N-linked (GlcNAc...) asparagine glycans are attached at residues Asn-84 and Asn-109. A run of 6 helical transmembrane segments spans residues 222–242, 268–288, 297–317, 327–347, 355–375, and 397–417; these read MFIL…SLNV, GLIY…IITF, FMVI…LVFL, LTNL…FTVF, LEWI…IQII, and IATF…ALYF. Residues 478 to 713 form the ABC transporter 1 domain; that stretch reads IRIRNVKKEY…WGLGYHLSLH (236 aa). 514-521 provides a ligand contact to ATP; sequence GHSGAGKS. Residues 854 to 874 traverse the membrane as a helical segment; it reads VLLTLLLVFGIAIFPLIVENI. N-linked (GlcNAc...) asparagine glycosylation occurs at Asn-940. Helical transmembrane passes span 1007–1027, 1062–1082, 1094–1114, 1127–1147, 1150–1170, and 1194–1214; these read IGLW…LCSI, ALVD…IFYI, IVFA…FFIY, SGLW…ITLI, FDLS…LLGF, and ATDF…VFVL. Residues 1288-1513 enclose the ABC transporter 2 domain; sequence GQKKSCFSKR…LGKDYILELK (226 aa). ATP is bound at residue 1320 to 1327; the sequence is GPNGAGKS.

Belongs to the ABC transporter superfamily. ABCA family. In terms of tissue distribution, widely expressed with higher expression in liver.

The protein localises to the golgi apparatus membrane. In terms of biological role, probable transporter which may play a role in macrophage lipid transport and homeostasis. The protein is ATP-binding cassette sub-family A member 6 (ABCA6) of Homo sapiens (Human).